The primary structure comprises 808 residues: Transcription activator of gluconeogenesis PAAG_01030 (808 aa).

The tract at residues 1-90 (MTSSVRNGSP…SAKDPLRPRR (90 aa)) is disordered. Over residues 69-83 (STSSTAASANNASAK) the composition is skewed to low complexity. The zn(2)-C6 fungal-type DNA-binding region spans 97 to 125 (CFACQRAHLTCGDERPCQRCIKRGLQDTC). The span at 158–170 (AARNKVNSNSQQR) shows a compositional bias: polar residues. Disordered stretches follow at residues 158 to 203 (AARN…FSTP), 236 to 285 (SAFQ…YGST), 322 to 387 (GAGD…IYNQ), 442 to 461 (PPTNTQHQQQPQPPRISTPS), and 598 to 629 (TGGSSSSGVSSRGSSTYNSRNSATTTVMDNQS). The segment covering 171–188 (NGTNSNSDNNSTNTNSNN) has biased composition (low complexity). Polar residues-rich tracts occupy residues 189 to 203 (KPSHQDVSTNFFSTP), 248 to 279 (FDLSSNPQNHTLSPSIAQNSGTTPSSSASQNP), 339 to 359 (GRSSGTFTVQNFGEGSSNQSP), and 377 to 387 (GPTNPRNIYNQ). Composition is skewed to low complexity over residues 442–451 (PPTNTQHQQQ) and 598–619 (TGGSSSSGVSSRGSSTYNSRNS). Residues 620–629 (ATTTVMDNQS) show a composition bias toward polar residues.

Belongs to the ERT1/acuK family.

The protein localises to the nucleus. Transcription factor which regulates nonfermentable carbon utilization. Activator of gluconeogenetic genes. This is Transcription activator of gluconeogenesis PAAG_01030 from Paracoccidioides lutzii (strain ATCC MYA-826 / Pb01) (Paracoccidioides brasiliensis).